We begin with the raw amino-acid sequence, 209 residues long: Pyrrolidone-carboxylate peptidase (209 aa).

Active-site residues include E79, C142, and H164.

The protein belongs to the peptidase C15 family. In terms of assembly, homotetramer.

It localises to the cytoplasm. The enzyme catalyses Release of an N-terminal pyroglutamyl group from a polypeptide, the second amino acid generally not being Pro.. Removes 5-oxoproline from various penultimate amino acid residues except L-proline. The chain is Pyrrolidone-carboxylate peptidase from Saccharolobus islandicus (strain Y.N.15.51 / Yellowstone #2) (Sulfolobus islandicus).